We begin with the raw amino-acid sequence, 463 residues long: FAD-dependent monooxygenase nodM (463 aa).

The helical transmembrane segment at 5-25 threads the bilayer; that stretch reads EFKVIIVGGSLAGLTLAHCLL. The FAD site is built by Glu35, Gly49, Arg108, Asp305, and Ala318. A helical transmembrane segment spans residues 438 to 458; sequence ILLGFTGVFTSALAMVVLLHI.

Belongs to the paxM FAD-dependent monooxygenase family. Requires FAD as cofactor.

It is found in the membrane. The protein operates within secondary metabolite biosynthesis. Its function is as follows. FAD-dependent monooxygenase; part of the gene cluster that mediates the biosynthesis of the indole diterpenes nodulisporic acids (NA). Nodulisporic acid A (NAA) and its chemically modified derivatives are of particular significance because of their highly potent insecticidal activity against blood-feeding arthropods and lack of observable adverse effects on mammals, in particular the tremogenicity associated with the paspaline-derived IDTs is not observed. The geranylgeranyl diphosphate (GGPP) synthase ggs1, localized outside of the cluster, is proposed to catalyze the first step in nodulisporic acid biosynthesis via conversion of farnesyl pyrophosphate and isopentyl pyrophosphate into geranylgeranyl pyrophosphate (GGPP). Condensation of indole-3-glycerol phosphate with GGPP by the prenyl transferase nodC then forms 3-geranylgeranylindole (3-GGI). Epoxidation by the FAD-dependent monooxygenase nodM leads to a single-epoxidized-GGI that is substrate of the terpene cyclase nodB for cyclization to yield emindole SB. The terminal methyl carbon, C28, of emindole SB is then oxidized by the cytochrome P450 monooxygenase nodW to produce nodulisporic acid F (NAF), the pentacyclic core of NAA. NAF is converted to nodulisporic acid E (NAE) via prenylation. This step is probably performed by one of the indole diterpene prenyltransferases nodD1 or nodD2. Several oxidation steps performed by the FAD-linked oxidoreductase nodO and one of the cytochrome P450 monooxygenase nodR, nodX or nodZ further convert NAE to nodulisporic acid D (NAD). NAD is substrate of cytochrome P450 monooxygenase nodJ to produce the precursor of nodulisporic acid C (NAC), converted to NAC by one of the indole diterpene prenyltransferases nodD1 or nodD2. The FAD-dependent monooxygenase nodY2 then oxidizes NAC to nodulisporic acid B (NAB). Finally NAB is converted to NAA by one of the cytochrome P450 monooxygenases nodR, nodX or nodZ. In Hypoxylon pulicicidum, this protein is FAD-dependent monooxygenase nodM.